The chain runs to 276 residues: NADPH-dependent 7-cyano-7-deazaguanine reductase (276 aa).

Residue 83–85 participates in substrate binding; that stretch reads IES. Position 85–86 (85–86) interacts with NADPH; sequence SK. The active-site Thioimide intermediate is Cys184. The Proton donor role is filled by Asp191. Substrate is bound at residue 223–224; that stretch reads HE. 252-253 serves as a coordination point for NADPH; sequence RG.

It belongs to the GTP cyclohydrolase I family. QueF type 2 subfamily. As to quaternary structure, homodimer.

It localises to the cytoplasm. The enzyme catalyses 7-aminomethyl-7-carbaguanine + 2 NADP(+) = 7-cyano-7-deazaguanine + 2 NADPH + 3 H(+). It functions in the pathway tRNA modification; tRNA-queuosine biosynthesis. Its function is as follows. Catalyzes the NADPH-dependent reduction of 7-cyano-7-deazaguanine (preQ0) to 7-aminomethyl-7-deazaguanine (preQ1). The polypeptide is NADPH-dependent 7-cyano-7-deazaguanine reductase (Pseudomonas aeruginosa (strain ATCC 15692 / DSM 22644 / CIP 104116 / JCM 14847 / LMG 12228 / 1C / PRS 101 / PAO1)).